The chain runs to 471 residues: Variant surface glycoprotein ILTAT 1.21 (471 aa).

An N-terminal signal peptide occupies residues 1–21 (MLRALLPSTTLALILAGGGHA). N-linked (GlcNAc...) asparagine glycosylation is found at asparagine 64 and asparagine 405. The tract at residues 406–449 (ATADECPETRCEYDSEKNECRPKKGTETTATGPGERTTPADGKA) is disordered. The span at 412–431 (PETRCEYDSEKNECRPKKGT) shows a compositional bias: basic and acidic residues. Asparagine 450 carries an N-linked (GlcNAc...) asparagine glycan. Serine 454 is lipidated: GPI-anchor amidated serine. A propeptide spans 455–471 (DSLLIKTSPLWLAFLLF) (removed in mature form).

The protein localises to the cell membrane. Functionally, VSG forms a coat on the surface of the parasite. The trypanosome evades the immune response of the host by expressing a series of antigenically distinct VSGs from an estimated 1000 VSG genes. In Trypanosoma brucei brucei, this protein is Variant surface glycoprotein ILTAT 1.21.